The chain runs to 122 residues: Small ribosomal subunit protein uS12c (122 aa).

The protein belongs to the universal ribosomal protein uS12 family. As to quaternary structure, part of the 30S ribosomal subunit.

Its subcellular location is the plastid. The protein localises to the chloroplast. With S4 and S5 plays an important role in translational accuracy. Located at the interface of the 30S and 50S subunits. This is Small ribosomal subunit protein uS12c (rps12) from Cyanidioschyzon merolae (strain NIES-3377 / 10D) (Unicellular red alga).